A 554-amino-acid chain; its full sequence is Thermosome subunit beta (554 aa).

A disordered region spans residues 532–554 (GKKSGSEPSGKKEKDKEEKSSED). A compositionally biased stretch (basic and acidic residues) spans 540–554 (SGKKEKDKEEKSSED).

The protein belongs to the TCP-1 chaperonin family. In terms of assembly, forms a Heterooligomeric complex of two stacked eight-membered rings.

Its function is as follows. Molecular chaperone; binds unfolded polypeptides in vitro, and has a weak ATPase activity. This Saccharolobus solfataricus (strain ATCC 35092 / DSM 1617 / JCM 11322 / P2) (Sulfolobus solfataricus) protein is Thermosome subunit beta (thsB).